Consider the following 706-residue polypeptide: Glycogen [starch] synthase (706 aa).

Arg26 serves as a coordination point for UDP. 2 residues coordinate UDP-alpha-D-glucose: His191 and Arg197. Alpha-D-glucose 6-phosphate-binding residues include His277, Glu278, Gln280, His283, and Lys287. UDP is bound at residue Arg317. Arg317 serves as a coordination point for UDP-alpha-D-glucose. His491 lines the alpha-D-glucose 6-phosphate pocket. Residues Glu500, Trp502, and Gly503 each contribute to the UDP-alpha-D-glucose site. Thr505 is a UDP binding site. Arg572 and Arg576 together coordinate alpha-D-glucose 6-phosphate. The interval 670 to 706 is disordered; sequence PEEEDPEEYPFPLTLKQRTGPGSPLDSIQGLQLNGTR.

This sequence belongs to the glycosyltransferase 3 family. As to quaternary structure, interacts with glucogenin gnn; the interaction is direct.

It carries out the reaction [(1-&gt;4)-alpha-D-glucosyl](n) + UDP-alpha-D-glucose = [(1-&gt;4)-alpha-D-glucosyl](n+1) + UDP + H(+). Its pathway is glycan biosynthesis; glycogen biosynthesis. Its activity is regulated as follows. Allosteric activation by glucose-6-phosphate, and phosphorylation by a cAMP-dependent kinase. Functionally, glycogen synthase participates in the glycogen biosynthetic process along with glycogenin and glycogen branching enzyme. Extends the primer composed of a few glucose units formed by glycogenin by adding new glucose units to it. In this context, glycogen synthase transfers the glycosyl residue from UDP-Glc to the non-reducing end of alpha-1,4-glucan. The sequence is that of Glycogen [starch] synthase (gsy-1) from Neurospora crassa (strain ATCC 24698 / 74-OR23-1A / CBS 708.71 / DSM 1257 / FGSC 987).